Here is a 380-residue protein sequence, read N- to C-terminus: Queuine tRNA-ribosyltransferase (380 aa).

The active-site Proton acceptor is the Asp-96. Substrate-binding positions include 96–100 (DSGGF), Asp-150, Gln-193, and Gly-220. The RNA binding stretch occupies residues 251-257 (GVGAPDS). The active-site Nucleophile is Asp-270. The interval 275–279 (TRIAR) is RNA binding; important for wobble base 34 recognition. Zn(2+) is bound by residues Cys-308, Cys-310, Cys-313, and His-339.

Belongs to the queuine tRNA-ribosyltransferase family. In terms of assembly, homodimer. Within each dimer, one monomer is responsible for RNA recognition and catalysis, while the other monomer binds to the replacement base PreQ1. Zn(2+) serves as cofactor.

The catalysed reaction is 7-aminomethyl-7-carbaguanine + guanosine(34) in tRNA = 7-aminomethyl-7-carbaguanosine(34) in tRNA + guanine. Its pathway is tRNA modification; tRNA-queuosine biosynthesis. Functionally, catalyzes the base-exchange of a guanine (G) residue with the queuine precursor 7-aminomethyl-7-deazaguanine (PreQ1) at position 34 (anticodon wobble position) in tRNAs with GU(N) anticodons (tRNA-Asp, -Asn, -His and -Tyr). Catalysis occurs through a double-displacement mechanism. The nucleophile active site attacks the C1' of nucleotide 34 to detach the guanine base from the RNA, forming a covalent enzyme-RNA intermediate. The proton acceptor active site deprotonates the incoming PreQ1, allowing a nucleophilic attack on the C1' of the ribose to form the product. After dissociation, two additional enzymatic reactions on the tRNA convert PreQ1 to queuine (Q), resulting in the hypermodified nucleoside queuosine (7-(((4,5-cis-dihydroxy-2-cyclopenten-1-yl)amino)methyl)-7-deazaguanosine). This Streptococcus pneumoniae (strain Hungary19A-6) protein is Queuine tRNA-ribosyltransferase.